Here is a 406-residue protein sequence, read N- to C-terminus: Peptidase T (406 aa).

H78 serves as a coordination point for Zn(2+). D80 is a catalytic residue. Residue D139 participates in Zn(2+) binding. Residue E173 is the Proton acceptor of the active site. Zn(2+)-binding residues include E174, D196, and H378.

The protein belongs to the peptidase M20B family. Requires Zn(2+) as cofactor.

The protein localises to the cytoplasm. It catalyses the reaction Release of the N-terminal residue from a tripeptide.. Cleaves the N-terminal amino acid of tripeptides. The chain is Peptidase T from Clostridium perfringens (strain SM101 / Type A).